The primary structure comprises 155 residues: Pathogenesis-related protein B (155 aa).

It belongs to the BetVI family.

The protein is Pathogenesis-related protein B (PCPR1-3) of Petroselinum crispum (Parsley).